Here is a 117-residue protein sequence, read N- to C-terminus: MAWISLILSLLALSSGGAISQAVVTQESALTTSPGETVTLTCRSSTGAVTTSNYANWVQEKPDHLFTGLIGGTNNRAPGVPARFSGSLIGDKAALTITGAQTEDEAIYFCALWYSNH.

The first 20 residues, 1-20, serve as a signal peptide directing secretion; the sequence is MAWISLILSLLALSSGGAIS. Gln-21 bears the Pyrrolidone carboxylic acid mark. Residues 21–117 form the Ig-like domain; it reads QAVVTQESAL…YFCALWYSNH (97 aa).

In Mus musculus (Mouse), this protein is Ig lambda-1 chain V region.